We begin with the raw amino-acid sequence, 499 residues long: MKSLSHTSSNKSNGSIFTKADESEKVISRSNTASPISIENTHLTKSERDSLLFRLDLVLAPTIMILYLVAFLDRSNIGNAKVAGLPEDLKLKGDQFNIIASVFYVTFILFEMPTTLLMKKVQPKRMLAFIVISYSLTTIFTGFCHNFGGLLAARLVLGFCEAGLFPCLALYLTMIYSRVELAPRIAYLFASSALSGAFGGLFAYAVLHMDGVGGFAGWRWLFIIEGLIGFVCGVAVYFIIPNDITKAWFLSKTHQEMMRKRQLERAADLEAAHFDWKGVKSAFTDFKVYLYALSEFGQDTCLYGFSTFLPAIISGMGYTSLSVQYMTIPVYILGAATYIAASFLSDRFHHRGIILIIGNIFPIVGYILLLACQNNKSVLYFACYLCSVGVYTGAGLNVTWLSANIAPHYKRATAISLQLAIANSSGILAGQIYRYPPKYIAGHLTSLIAIFISTVLHVVNIFFLKHQNSKKQKSLASSSTIDLSEQPKDDKDARFHYIL.

Transmembrane regions (helical) follow at residues 51 to 71 (LLFR…LVAF), 98 to 118 (IIAS…TLLM), 127 to 147 (LAFI…CHNF), 155 to 175 (LVLG…LTMI), 187 to 207 (YLFA…YAVL), 220 to 240 (WLFI…YFII), 301 to 321 (CLYG…YTSL), 325 to 345 (YMTI…SFLS), 352 to 372 (GIIL…LLAC), 378 to 398 (VLYF…GLNV), 412 to 432 (ATAI…AGQI), and 444 to 464 (LTSL…IFFL).

This sequence belongs to the major facilitator superfamily. Allantoate permease family.

It is found in the golgi apparatus. It localises to the membrane. This is an uncharacterized protein from Schizosaccharomyces pombe (strain 972 / ATCC 24843) (Fission yeast).